The chain runs to 357 residues: Fulicin peptides (357 aa).

Residues 1 to 17 form the signal peptide; it reads MQPTVLLILMTSCLTYQ. Positions 18-119 are excised as a propeptide; sequence VIADKPKGNH…VDGSQGHLEP (102 aa). Asn123 bears the D-asparagine mark. Val126 carries the post-translational modification Valine amide. Residues 130–194 constitute a propeptide that is removed on maturation; it reads NTLPEEAGSF…YNTMNEDEAS (65 aa). Residues Val201 and Val209 each carry the valine amide modification. Leucine amide is present on residues Leu217 and Leu226. Ile233 and Ile242 each carry isoleucine amide. Val250 and Val259 each carry valine amide. Positions 263–298 are excised as a propeptide; it reads NQGVFTVSPSSTKISFDDNYLPYLSSVDAGDLSDVN. Leu305 is subject to Leucine amide. The propeptide occupies 311–357; that stretch reads TAEQDETSQRSNERLVALLQNTGFRKRLSRMLQNQRLVEHYPEFIGK.

Found in central ganglia and the ventricles and atria of the heart.

Functionally, potentiates tetanic contraction of the penis retractor muscle at very low concentrations, and also shows modulatory actions on the activity of the buccal and ventricular muscles and the central ganglionic neurons. In Lissachatina fulica (Giant African land snail), this protein is Fulicin peptides.